The chain runs to 448 residues: Phosphoglucosamine mutase (448 aa).

The active-site Phosphoserine intermediate is Ser100. Mg(2+) contacts are provided by Ser100, Asp240, Asp242, and Asp244. At Ser100 the chain carries Phosphoserine.

It belongs to the phosphohexose mutase family. The cofactor is Mg(2+). In terms of processing, activated by phosphorylation.

The catalysed reaction is alpha-D-glucosamine 1-phosphate = D-glucosamine 6-phosphate. In terms of biological role, catalyzes the conversion of glucosamine-6-phosphate to glucosamine-1-phosphate. The chain is Phosphoglucosamine mutase from Bacillus licheniformis (strain ATCC 14580 / DSM 13 / JCM 2505 / CCUG 7422 / NBRC 12200 / NCIMB 9375 / NCTC 10341 / NRRL NRS-1264 / Gibson 46).